Reading from the N-terminus, the 199-residue chain is Imidazoleglycerol-phosphate dehydratase (199 aa).

It belongs to the imidazoleglycerol-phosphate dehydratase family.

Its subcellular location is the cytoplasm. The catalysed reaction is D-erythro-1-(imidazol-4-yl)glycerol 3-phosphate = 3-(imidazol-4-yl)-2-oxopropyl phosphate + H2O. Its pathway is amino-acid biosynthesis; L-histidine biosynthesis; L-histidine from 5-phospho-alpha-D-ribose 1-diphosphate: step 6/9. This chain is Imidazoleglycerol-phosphate dehydratase, found in Paramagnetospirillum magneticum (strain ATCC 700264 / AMB-1) (Magnetospirillum magneticum).